A 188-amino-acid polypeptide reads, in one-letter code: uncharacterized protein (188 aa).

Residues 1-23 form the signal peptide; sequence MFKGQKTLAALAVSLLFTAPVYA. An intrachain disulfide couples cysteine 42 to cysteine 81.

Belongs to the fimbrial protein family.

Its subcellular location is the fimbrium. This is an uncharacterized protein from Escherichia coli (strain K12).